Reading from the N-terminus, the 255-residue chain is Hemin import ATP-binding protein HmuV (255 aa).

Positions 2–238 (LQVEGLYLCR…AALKAVYGID (237 aa)) constitute an ABC transporter domain. Position 34–41 (34–41 (GPNGAGKS)) interacts with ATP.

It belongs to the ABC transporter superfamily. Heme (hemin) importer (TC 3.A.1.14.5) family. The complex is composed of two ATP-binding proteins (HmuV), two transmembrane proteins (HmuU) and a solute-binding protein (HmuT).

The protein localises to the cell inner membrane. Part of the ABC transporter complex HmuTUV involved in hemin import. Responsible for energy coupling to the transport system. The sequence is that of Hemin import ATP-binding protein HmuV from Pseudomonas putida (strain ATCC 47054 / DSM 6125 / CFBP 8728 / NCIMB 11950 / KT2440).